We begin with the raw amino-acid sequence, 525 residues long: Retinoblastoma-binding-like protein E (525 aa).

WD repeat units lie at residues 25–66, 69–108, 222–261, 267–312, and 313–352; these read PKNI…IVRT, HHTGCVNSISWSRNGKKLLTASNDGSLVLWDLATSKILYS, SSNTTVKQIEFSRNHRFMLVSSSDKVLRLISLESTNLYQQ, DSVN…KDLE, and GPKEGLVDVVWHPLRPIIVSISFTGVIYVWTAYFEENWSS. Disordered regions lie at residues 371-398 and 462-525; these read DEFDAKDSDNENQEVNNNNNNNIGRNPY and EKYQ…KKRK. A compositionally biased stretch (low complexity) spans 383–392; the sequence is QEVNNNNNNN. The span at 462–471 shows a compositional bias: basic and acidic residues; that stretch reads EKYQKDKEDS. The span at 472-500 shows a compositional bias: low complexity; that stretch reads SSTTSNSTISSSSSPSPSSSSTTTTTTTS. Basic and acidic residues predominate over residues 501 to 525; sequence QKKDETQKKEKSTKKERNSDSKKRK.

It is found in the nucleus. Functionally, involved in mono-, di- and trimethylation at 'Lys-4' of histone H3. Histone H3 'Lys-4' methylation represents a specific tag for epigenetic transcriptional activation. The protein is Retinoblastoma-binding-like protein E of Dictyostelium discoideum (Social amoeba).